The chain runs to 426 residues: MNELDLNQYMDRVGRQARAASRAMARASTADKNRALLTIAAAIRRDADKLKAVNARDVERARANGQDAAFIDRLTLSDKAIATMAAGLGQIAALADPIGEISNMKFRPTGIQVGQMRVPLGVIGIIYESRPNVTIDAAALCLKSGNATILRGGSEAIESNTALAALVAEGLSAAGLPSEAVQVIETTDRAAVGRLITMTEYVDVIVPRGGKSLIARLMEEARVPMIKHLDGICHVYIDADADLDKAVRVCDNAKTQRYAPCNTMETLLVSQDIAAAALPPLCRIYQEKGVELRVCPATRATLEAAGFTGLVDAAEEDWRLEYLAPILAIKTVAGLDDAIAHINEYGSHHTDSIITENYSAGMRFIREVDSASVMINASTRFADGFEYGLGAEIGISNDKLHARGPVGLEGLTSLKYVVFGHGEIRT.

This sequence belongs to the gamma-glutamyl phosphate reductase family.

The protein resides in the cytoplasm. The enzyme catalyses L-glutamate 5-semialdehyde + phosphate + NADP(+) = L-glutamyl 5-phosphate + NADPH + H(+). Its pathway is amino-acid biosynthesis; L-proline biosynthesis; L-glutamate 5-semialdehyde from L-glutamate: step 2/2. Its function is as follows. Catalyzes the NADPH-dependent reduction of L-glutamate 5-phosphate into L-glutamate 5-semialdehyde and phosphate. The product spontaneously undergoes cyclization to form 1-pyrroline-5-carboxylate. This chain is Gamma-glutamyl phosphate reductase, found in Cupriavidus necator (strain ATCC 17699 / DSM 428 / KCTC 22496 / NCIMB 10442 / H16 / Stanier 337) (Ralstonia eutropha).